A 375-amino-acid polypeptide reads, in one-letter code: Holliday junction branch migration complex subunit RuvB (375 aa).

Residues 1–50 are disordered; the sequence is MAIVSSKSPDPAERRSQAKTKPSVSEPQDSLVRPQAAPEESQRPEDQIRP. A large ATPase domain (RuvB-L) region spans residues 13 to 209; that stretch reads ERRSQAKTKP…FGLVQRLRFY (197 aa). Polar residues predominate over residues 19 to 28; that stretch reads KTKPSVSEPQ. Residues 40-49 show a composition bias toward basic and acidic residues; it reads ESQRPEDQIR. Residues I48, R49, G90, K93, T94, T95, 156-158, R199, Y209, and R246 contribute to the ATP site; that span reads EDF. T94 serves as a coordination point for Mg(2+). Residues 210–280 form a small ATPAse domain (RuvB-S) region; it reads EVEALTDIVQ…IAATALELYN (71 aa). The tract at residues 283 to 375 is head domain (RuvB-H); sequence PCGLDWTDRR…LQQLLTEPET (93 aa). Residues R338 and R343 each coordinate DNA.

The protein belongs to the RuvB family. Homohexamer. Forms an RuvA(8)-RuvB(12)-Holliday junction (HJ) complex. HJ DNA is sandwiched between 2 RuvA tetramers; dsDNA enters through RuvA and exits via RuvB. An RuvB hexamer assembles on each DNA strand where it exits the tetramer. Each RuvB hexamer is contacted by two RuvA subunits (via domain III) on 2 adjacent RuvB subunits; this complex drives branch migration. In the full resolvosome a probable DNA-RuvA(4)-RuvB(12)-RuvC(2) complex forms which resolves the HJ.

The protein localises to the cytoplasm. The enzyme catalyses ATP + H2O = ADP + phosphate + H(+). The RuvA-RuvB-RuvC complex processes Holliday junction (HJ) DNA during genetic recombination and DNA repair, while the RuvA-RuvB complex plays an important role in the rescue of blocked DNA replication forks via replication fork reversal (RFR). RuvA specifically binds to HJ cruciform DNA, conferring on it an open structure. The RuvB hexamer acts as an ATP-dependent pump, pulling dsDNA into and through the RuvAB complex. RuvB forms 2 homohexamers on either side of HJ DNA bound by 1 or 2 RuvA tetramers; 4 subunits per hexamer contact DNA at a time. Coordinated motions by a converter formed by DNA-disengaged RuvB subunits stimulates ATP hydrolysis and nucleotide exchange. Immobilization of the converter enables RuvB to convert the ATP-contained energy into a lever motion, pulling 2 nucleotides of DNA out of the RuvA tetramer per ATP hydrolyzed, thus driving DNA branch migration. The RuvB motors rotate together with the DNA substrate, which together with the progressing nucleotide cycle form the mechanistic basis for DNA recombination by continuous HJ branch migration. Branch migration allows RuvC to scan DNA until it finds its consensus sequence, where it cleaves and resolves cruciform DNA. The polypeptide is Holliday junction branch migration complex subunit RuvB (Synechococcus elongatus (strain ATCC 33912 / PCC 7942 / FACHB-805) (Anacystis nidulans R2)).